The sequence spans 209 residues: Large ribosomal subunit protein uL1 (209 aa).

The protein belongs to the universal ribosomal protein uL1 family. As to quaternary structure, part of the 50S ribosomal subunit.

Functionally, binds directly to 23S rRNA. The L1 stalk is quite mobile in the ribosome, and is involved in E site tRNA release. In terms of biological role, protein L1 is also a translational repressor protein, it controls the translation of the L11 operon by binding to its mRNA. The protein is Large ribosomal subunit protein uL1 (rplA) of Neorickettsia sennetsu (strain ATCC VR-367 / Miyayama) (Ehrlichia sennetsu).